A 357-amino-acid chain; its full sequence is Spermatogenesis- and oogenesis-specific basic helix-loop-helix-containing protein 1 (357 aa).

Residues 1 to 14 (MASGGHERANEDYR) show a composition bias toward basic and acidic residues. The tract at residues 1–40 (MASGGHERANEDYRVSGITGCSKTPQPETQDSLQTSSQSS) is disordered. The segment covering 19 to 31 (TGCSKTPQPETQD) has biased composition (polar residues). The bHLH domain maps to 54–105 (PSLRRNVVSERERRRRISLSCEHLRALLPQFDGRREDMASVLEMSVYFLQLA). The segment at 145-210 (KPDSGIAKPS…EPESSSLGPG (66 aa)) is disordered. A compositionally biased stretch (low complexity) spans 200–209 (SEPESSSLGP).

In terms of assembly, forms both hetero- and homodimers with SOHLH2. In terms of tissue distribution, in males, it is mainly expressed in testis, while in females it is mainly expressed in ovary. In testis, it is exclusively expressed in spermatogonia, with a preference for prespermatogonia and type A spermatogonia. In ovary, it is detected in germ cell cysts, primordial follicles, and primary follicles but is undetectable by the secondary follicle stage (at protein level). Expressed in the majority of spermatogonia in adult animals, but not in the most undifferentiated spermatogonial population.

Its subcellular location is the cytoplasm. It is found in the nucleus. Transcription regulator of both male and female germline differentiation. Suppresses genes involved in spermatogonial stem cells maintenance, and induces genes important for spermatogonial differentiation. Coordinates oocyte differentiation without affecting meiosis I. This chain is Spermatogenesis- and oogenesis-specific basic helix-loop-helix-containing protein 1 (Sohlh1), found in Mus musculus (Mouse).